The primary structure comprises 149 residues: Large ribosomal subunit protein uL22 (149 aa).

The protein belongs to the universal ribosomal protein uL22 family. Part of the 50S ribosomal subunit.

This protein binds specifically to 23S rRNA. It makes multiple contacts with different domains of the 23S rRNA in the assembled 50S subunit and ribosome. Functionally, the globular domain of the protein is located near the polypeptide exit tunnel on the outside of the subunit, while an extended beta-hairpin is found that lines the wall of the exit tunnel in the center of the 70S ribosome. The protein is Large ribosomal subunit protein uL22 of Picrophilus torridus (strain ATCC 700027 / DSM 9790 / JCM 10055 / NBRC 100828 / KAW 2/3).